A 272-amino-acid polypeptide reads, in one-letter code: MKRTAFFISDGTGITAETLGQSLLAQFESIPFNKFTRPYIDSPDKARVMVQQINAAAERDGVRPIIFDTIVNQDIREILATSNGFMIDIFSSFLSPLEQELIAHSSYSVGKSHSIGGNSNYMERIEAVNFALDNDDGARTHYYDKADLILVGVSRCGKTPTCLYMAMQFGIRAANYPLTEDDMERLQLPAVLKKHHSKLFGLTIDPDRLTAIRHERKPNSRYSSFAQCEFEVREVESLFRRENIPNINSTHFSVEEISAKILVEKGVERRFK.

152–159 (GVSRCGKT) contributes to the ADP binding site.

Belongs to the pyruvate, phosphate/water dikinase regulatory protein family. PSRP subfamily.

It catalyses the reaction [pyruvate, water dikinase] + ADP = [pyruvate, water dikinase]-phosphate + AMP + H(+). The enzyme catalyses [pyruvate, water dikinase]-phosphate + phosphate + H(+) = [pyruvate, water dikinase] + diphosphate. Its function is as follows. Bifunctional serine/threonine kinase and phosphorylase involved in the regulation of the phosphoenolpyruvate synthase (PEPS) by catalyzing its phosphorylation/dephosphorylation. This chain is Putative phosphoenolpyruvate synthase regulatory protein, found in Pseudomonas putida (strain ATCC 47054 / DSM 6125 / CFBP 8728 / NCIMB 11950 / KT2440).